Consider the following 147-residue polypeptide: Large ribosomal subunit protein bL21 (147 aa).

The tract at residues 115–147 is disordered; it reads KSIKVGKPTPKSSSKKEETVKKETKPKSEKSTN. Residues 128-147 show a composition bias toward basic and acidic residues; that stretch reads SKKEETVKKETKPKSEKSTN.

This sequence belongs to the bacterial ribosomal protein bL21 family. In terms of assembly, part of the 50S ribosomal subunit. Contacts protein L20.

In terms of biological role, this protein binds to 23S rRNA in the presence of protein L20. This Prochlorococcus marinus (strain MIT 9215) protein is Large ribosomal subunit protein bL21.